The sequence spans 383 residues: MAPSSSSCHDAAASMLLCAEDNSSILWLEDEEGEVGERRSGGCRSMVGDLAAGGGGGSGGGGVEEEEDMFPRQSEECVASLVEREQAHMPRADYGERLRGGGGDVDLRVRSEAIGWIWEVYTYYNFSSVTAYLAVNYLDRFLSQYELPEGRDWMTQLLSVACLSIAAKMEETVVPQCLDLQIGEPRFLFEVETIHRMELLVLTNLNWRMQAVTPFSYIDYFLRKLNSGNAAPRSWLLRSSELILRIAAGTGFLEFRPSEIAAAVAATVAGEATGVVEEDIAEAFTHVDKGRVLQCQEAIQDHHYSMATINTVQPKPASTRRGSASASSSSVPESPVAVLDAGCLSYKSDDTDAATIASHGGGRRKSCFDSSPVTSKKRRKLSR.

Residues 51–62 (AAGGGGGSGGGG) show a composition bias toward gly residues. 3 disordered regions span residues 51–70 (AAGGGGGSGGGGVEEEEDMF), 313–335 (QPKPASTRRGSASASSSSVPESP), and 354–383 (ATIASHGGGRRKSCFDSSPVTSKKRRKLSR). Residues 323 to 335 (SASASSSSVPESP) show a composition bias toward low complexity.

It belongs to the cyclin family. Cyclin D subfamily.

This is Cyclin-D4-2 (CYCD4-2) from Oryza sativa subsp. japonica (Rice).